Here is a 230-residue protein sequence, read N- to C-terminus: RNA-binding protein 24 (230 aa).

The region spanning 11–88 (TKIFVGGLPY…RKANVNLAYL (78 aa)) is the RRM domain.

It localises to the nucleus. It is found in the cytoplasm. Its function is as follows. Multifunctional RNA-binding protein involved in the regulation of pre-mRNA splicing, mRNA stability and mRNA translation important for cell fate decision and differentiation. Plays a major role in pre-mRNA alternative splicing regulation. Mediates preferentially muscle-specific exon inclusion in numerous mRNAs important for striated cardiac and skeletal muscle cell differentiation. Binds to intronic splicing enhancer (ISE) composed of stretches of GU-rich motifs localized in flanking intron of exon that will be included by alternative splicing. Involved in embryonic stem cell (ESC) transition to cardiac cell differentiation by promoting pre-mRNA alternative splicing events of several pluripotency and/or differentiation genes. Plays a role in the regulation of mRNA stability and mRNA translation to which it is bound. Involved in myogenic differentiation by regulating myog levels. Binds to a huge amount of mRNAs. Required for embryonic heart development, sarcomer and M-band formation in striated muscles. This Danio rerio (Zebrafish) protein is RNA-binding protein 24 (rbm24).